A 91-amino-acid polypeptide reads, in one-letter code: Small ribosomal subunit protein bS16 (91 aa).

The protein belongs to the bacterial ribosomal protein bS16 family.

The protein is Small ribosomal subunit protein bS16 of Limosilactobacillus fermentum (strain NBRC 3956 / LMG 18251) (Lactobacillus fermentum).